A 558-amino-acid polypeptide reads, in one-letter code: MTIDPYAYAAAHGPRAGDRLRLGDSGLVIRVESDAQHYGDEFLAGFGKTARDGLHLKAAAVRDTCDVVISNVVVIDAVQGIRKVSIGIREGRVHAIGRAGNPDTLDGVDVVVGTGTSIVSGEGLIATAGAVDTHVHLLSPRIMEASLASGVTTIIGQEFGPVWGVGVNSPWALKHAFGAFDAWPVNIGFLGRGSSSHEAPLIEALAEGGASGFKVHEDMGAHTRALDTALRVAEEHDVQVALHSDGLNECLSVEDTLRVLDGRTIHAFHIEGCGGGHVPNVLKMAGVPHVIGSSTNPTLPFGRDAVAEHYGMIVSVHDLKTDLPGDAAMARDRIRAGTMGAEDVLHDLGAIGITSSDAQGMGRAGETVRRTFAMAGKMKAQFGAEGDDDNARVLRYIAKLTINPALAHGLAHEVGSIEVGKLADLVLWRPDHFGAKPQLVLKSGFPAYGVVGDPNAATDTCEPLVLGPQFGAHGATPAEISVAFVAQAALDQGGDTMPTRRRRVAVRGTRGIGPADLRLNSRTGAVDVDQRTGLVTLDGDPLRSEPAESVSLNRLYFL.

Residues 129–558 enclose the Urease domain; sequence GAVDTHVHLL…SVSLNRLYFL (430 aa). Positions 134, 136, and 214 each coordinate Ni(2+). Lysine 214 carries the N6-carboxylysine modification. Position 216 (histidine 216) interacts with substrate. Positions 243 and 269 each coordinate Ni(2+). The active-site Proton donor is histidine 317. Residue aspartate 357 participates in Ni(2+) binding.

The protein belongs to the metallo-dependent hydrolases superfamily. Urease alpha subunit family. As to quaternary structure, may form a heterohexamer of 3 UreC (alpha) and 3 UreAB (gamma/beta) subunits. May also form a heterotrimer of UreA (gamma), UreB (beta) and UreC (alpha) subunits. Three heterotrimers associate to form the active enzyme. Requires Ni cation as cofactor. In terms of processing, carboxylation allows a single lysine to coordinate two nickel ions.

It is found in the cytoplasm. The enzyme catalyses urea + 2 H2O + H(+) = hydrogencarbonate + 2 NH4(+). Its pathway is nitrogen metabolism; urea degradation; CO(2) and NH(3) from urea (urease route): step 1/1. In Streptomyces coelicolor (strain ATCC BAA-471 / A3(2) / M145), this protein is Urease subunit alpha 2.